Consider the following 209-residue polypeptide: Ribonuclease HII (209 aa).

In terms of domain architecture, RNase H type-2 spans 7-198 (GPVAGVDEAG…VAKAHQEWLH (192 aa)). Asp-13, Glu-14, and Asp-107 together coordinate a divalent metal cation.

The protein belongs to the RNase HII family. Requires Mn(2+) as cofactor. The cofactor is Mg(2+).

It localises to the cytoplasm. The catalysed reaction is Endonucleolytic cleavage to 5'-phosphomonoester.. Functionally, endonuclease that specifically degrades the RNA of RNA-DNA hybrids. This Corynebacterium glutamicum (strain R) protein is Ribonuclease HII.